The primary structure comprises 337 residues: Anthranilate phosphoribosyltransferase (337 aa).

Residues Gly81, Gly84–Asp85, Ser89, Asn91–Thr94, Lys109–Ser117, and Ala121 contribute to the 5-phospho-alpha-D-ribose 1-diphosphate site. Anthranilate is bound at residue Gly81. Residue Ser93 participates in Mg(2+) binding. Asn112 is an anthranilate binding site. Arg167 contacts anthranilate. Mg(2+)-binding residues include Asp226 and Glu227.

Belongs to the anthranilate phosphoribosyltransferase family. As to quaternary structure, homodimer. It depends on Mg(2+) as a cofactor.

The catalysed reaction is N-(5-phospho-beta-D-ribosyl)anthranilate + diphosphate = 5-phospho-alpha-D-ribose 1-diphosphate + anthranilate. The protein operates within amino-acid biosynthesis; L-tryptophan biosynthesis; L-tryptophan from chorismate: step 2/5. In terms of biological role, catalyzes the transfer of the phosphoribosyl group of 5-phosphorylribose-1-pyrophosphate (PRPP) to anthranilate to yield N-(5'-phosphoribosyl)-anthranilate (PRA). The chain is Anthranilate phosphoribosyltransferase from Nitrobacter hamburgensis (strain DSM 10229 / NCIMB 13809 / X14).